Here is a 384-residue protein sequence, read N- to C-terminus: Protein NDRG1 (384 aa).

Residue Ser-2 is modified to N-acetylserine. A phosphoserine mark is found at Ser-2, Ser-319, and Ser-326. Residues 325-384 are disordered; it reads RSRTASGSSVTSLEGARSRSHTSEGTRSRSHTSEGTRLDIIPNSGGPGSSAGPNSTEVSC. A compositionally biased stretch (polar residues) spans 327 to 336; that stretch reads RTASGSSVTS. At Thr-328 the chain carries Phosphothreonine; by SGK1. A phosphoserine; by SGK1 mark is found at Ser-330 and Ser-332. Position 333 is a phosphoserine (Ser-333). Thr-335 bears the Phosphothreonine mark. A phosphoserine mark is found at Ser-336 and Ser-342. A run of 2 repeats spans residues 339-348 and 349-358. Positions 339-358 are 2 X 10 AA tandem repeats of G-[PST]-R-S-R-S-H-T-S-E; that stretch reads GARSRSHTSEGTRSRSHTSE. Positions 345–361 are enriched in basic and acidic residues; it reads HTSEGTRSRSHTSEGTR. Thr-346 carries the phosphothreonine; by SGK1 modification. Ser-352 is modified (phosphoserine). At Thr-356 the chain carries Phosphothreonine; by SGK1. The span at 374–384 shows a compositional bias: low complexity; the sequence is SAGPNSTEVSC.

Belongs to the NDRG family. In terms of assembly, interacts with RAB4A (membrane-bound form); the interaction involves NDRG1 in vesicular recycling of CDH1. Interacts with APOA1, APOA2, PRA1 and RTN1. Post-translationally, under stress conditions, phosphorylated in the C-terminal on many serine and threonine residues. Phosphorylated in vitro by PKA. Phosphorylation enhanced by increased intracellular cAMP levels. Homocysteine induces dephosphorylation. Phosphorylation by SGK1 is cell cycle dependent.

Its subcellular location is the cytoplasm. It localises to the cytosol. The protein localises to the cytoskeleton. The protein resides in the microtubule organizing center. It is found in the centrosome. Its subcellular location is the nucleus. It localises to the cell membrane. Its function is as follows. Stress-responsive protein involved in hormone responses, cell growth, and differentiation. Acts as a tumor suppressor in many cell types. Necessary but not sufficient for p53/TP53-mediated caspase activation and apoptosis. Has a role in cell trafficking notably of the Schwann cell and is necessary for the maintenance and development of the peripheral nerve myelin sheath. Required for vesicular recycling of CDH1 and TF. May also function in lipid trafficking. Protects cells from spindle disruption damage. Functions in p53/TP53-dependent mitotic spindle checkpoint. Regulates microtubule dynamics and maintains euploidy. The chain is Protein NDRG1 (NDRG1) from Bos taurus (Bovine).